Reading from the N-terminus, the 156-residue chain is 6,7-dimethyl-8-ribityllumazine synthase (156 aa).

5-amino-6-(D-ribitylamino)uracil is bound by residues F22, 57 to 59, and 81 to 83; these read AYE and TVI. 86-87 lines the (2S)-2-hydroxy-3-oxobutyl phosphate pocket; sequence GT. Catalysis depends on H89, which acts as the Proton donor. A 5-amino-6-(D-ribitylamino)uracil-binding site is contributed by F114. R128 provides a ligand contact to (2S)-2-hydroxy-3-oxobutyl phosphate.

Belongs to the DMRL synthase family. As to quaternary structure, forms an icosahedral capsid composed of 60 subunits, arranged as a dodecamer of pentamers.

The catalysed reaction is (2S)-2-hydroxy-3-oxobutyl phosphate + 5-amino-6-(D-ribitylamino)uracil = 6,7-dimethyl-8-(1-D-ribityl)lumazine + phosphate + 2 H2O + H(+). The protein operates within cofactor biosynthesis; riboflavin biosynthesis; riboflavin from 2-hydroxy-3-oxobutyl phosphate and 5-amino-6-(D-ribitylamino)uracil: step 1/2. Functionally, catalyzes the formation of 6,7-dimethyl-8-ribityllumazine by condensation of 5-amino-6-(D-ribitylamino)uracil with 3,4-dihydroxy-2-butanone 4-phosphate. This is the penultimate step in the biosynthesis of riboflavin. The sequence is that of 6,7-dimethyl-8-ribityllumazine synthase from Enterobacter sp. (strain 638).